The primary structure comprises 286 residues: Master replication protein (286 aa).

The 95-residue stretch at 2–96 (ARYVVCWMFT…IEGPFEFGSF (95 aa)) folds into the CRESS-DNA virus Rep endonuclease domain. The RCR-1 signature appears at 9–12 (MFTI). A divalent metal cation is bound by residues Glu-33 and His-41. Positions 41–43 (HVQ) match the RCR-2 motif. The short motif at 50–70 (RRSSLKQMRGFFPGAHLEKRK) is the Nuclear localization signal element. Residue Tyr-79 is the For DNA cleavage activity of the active site. Positions 79–82 (YCMK) match the RCR-3 motif. Residue Asp-84 participates in a divalent metal cation binding. Residues 96–102 (FKLSCND) carry the Nuclear localization signal motif. 180-188 (GPNGGEGKT) lines the ATP pocket.

It belongs to the nanoviridea/circoviridae replication-associated protein family. Homooligomer (Potential). Rep binds to repeated DNA motifs (iterons). Requires Mg(2+) as cofactor. Mn(2+) is required as a cofactor.

The protein resides in the host nucleus. It carries out the reaction ATP + H2O = ADP + phosphate + H(+). Essential for the replication of all genomic viral ssDNA (trans-replication). The closed circular ssDNA genome is first converted to a superhelical dsDNA. Rep binds a specific hairpin at the genome origin of replication. Introduces an endonucleolytic nick within the conserved sequence 5'-A[GT]TATTAC-3' in the intergenic region of the genome, thereby initiating the rolling circle replication (RCR). Following cleavage, binds covalently to the 5'-phosphate of DNA as a tyrosyl ester. The cleavage gives rise to a free 3'-OH that serves as a primer for the cellular DNA polymerase. The polymerase synthesizes the (+) strand DNA by rolling circle mechanism. After one round of replication, a Rep-catalyzed nucleotidyl transfer reaction releases a circular single-stranded virus genome, thereby terminating the replication. Displays origin-specific DNA cleavage, nucleotidyl transferase, ATPase and helicase activities. In Musa (BBTV), this protein is Master replication protein (DNA-R).